The sequence spans 239 residues: Large ribosomal subunit protein uL1 (239 aa).

It belongs to the universal ribosomal protein uL1 family. In terms of assembly, part of the 50S ribosomal subunit.

Binds directly to 23S rRNA. The L1 stalk is quite mobile in the ribosome, and is involved in E site tRNA release. Functionally, protein L1 is also a translational repressor protein, it controls the translation of the L11 operon by binding to its mRNA. This Rickettsia bellii (strain OSU 85-389) protein is Large ribosomal subunit protein uL1.